A 635-amino-acid chain; its full sequence is Cationic amino acid transporter 2, vacuolar (635 aa).

Residues 1-48 (MGFLVDTQKEGGGHSWGYVRSLVRRKQVDSANGQSHGHQLARALTVPH) lie on the Cytoplasmic side of the membrane. A helical membrane pass occupies residues 49 to 69 (LVAIGVGATIGAGVYILVGTV). Residues 70–76 (AREHSGP) are Vacuolar-facing. A helical transmembrane segment spans residues 77–97 (SLALSFLIAGIAAGLSAFCYA). Topologically, residues 98–108 (ELSSRCPSAGS) are cytoplasmic. Residues 109–131 (AYHYSYICVGEGVAWIIGWALIL) traverse the membrane as a helical segment. The Vacuolar segment spans residues 132–171 (EYTIGGSAVARGISPNLALIFGGEDGLPAILARHQIPGLD). A helical transmembrane segment spans residues 172 to 192 (IVVDPCAAILVFVVTGLLCMG). Residues 193-200 (IKESTFAQ) lie on the Cytoplasmic side of the membrane. A helical transmembrane segment spans residues 201 to 221 (GIVTAVNVCVLLFVIVAGSYL). Residues 222 to 235 (GFKTGWPGYELPTG) lie on the Vacuolar side of the membrane. The chain crosses the membrane as a helical span at residues 236–256 (FFPFGVDGMFAGSATVFFAFI). The Cytoplasmic segment spans residues 257–280 (GFDSVASTAEEVRNPQRDLPIGIG). The chain crosses the membrane as a helical span at residues 281-301 (LALLLCCSLYMMVSIVIVGLI). The Vacuolar segment spans residues 302 to 324 (PYYAMDPDTPISSAFASHDMQWA). Residues 325–345 (VYLITLGAVMALCSALMGALL) form a helical membrane-spanning segment. Topologically, residues 346 to 376 (PQPRILMAMARDGLLPSIFSDINKRTQVPVK) are cytoplasmic. The helical transmembrane segment at 377-397 (ATVATGLCAATLAFFMDVSQL) threads the bilayer. Residue Ala398 is a topological domain, vacuolar. The helical transmembrane segment at 399–419 (GMVSVGTLLAFTMVAISVLIL) threads the bilayer. At 420–493 (RYVPPDEQPL…CLVLSEETRR (74 aa)) the chain is on the cytoplasmic side. Residues 494-514 (IVAGWSIMFTCVGAFLLSYAA) traverse the membrane as a helical segment. Residues 515–524 (SSLSFPGLIR) are Vacuolar-facing. The helical transmembrane segment at 525–545 (YPLCGVGGCLLLAGLIALSSI) threads the bilayer. Topologically, residues 546 to 560 (DQDDARHTFGHSGGY) are cytoplasmic. The helical transmembrane segment at 561–581 (MCPFVPLLPIICILINMYLLV) threads the bilayer. Residues 582–585 (NLGS) are Vacuolar-facing. The chain crosses the membrane as a helical span at residues 586-606 (ATWARVSVWLLIGVIVYVFYG). Topologically, residues 607 to 635 (RKNSSLANAVYVTTAHAEEIYREHEGSLA) are cytoplasmic.

Belongs to the amino acid-polyamine-organocation (APC) superfamily. Cationic amino acid transporter (CAT) (TC 2.A.3.3) family. Expressed in roots, stems, flowers, leaves, and siliques.

Its subcellular location is the vacuole membrane. Permease involved in the transport of the cationic amino acids. In Arabidopsis thaliana (Mouse-ear cress), this protein is Cationic amino acid transporter 2, vacuolar (CAT2).